The primary structure comprises 151 residues: Small ribosomal subunit protein uS11 (151 aa).

The disordered stretch occupies residues 129 to 151 (IEDVTPVPSDSTRRKGGRRGRRL). Positions 142 to 151 (RKGGRRGRRL) are enriched in basic residues.

It belongs to the universal ribosomal protein uS11 family.

The sequence is that of Small ribosomal subunit protein uS11 (RPS14) from Procambarus clarkii (Red swamp crayfish).